A 258-amino-acid polypeptide reads, in one-letter code: Hydroxyethylthiazole kinase (258 aa).

Residue methionine 37 coordinates substrate. Arginine 112 and threonine 158 together coordinate ATP. Alanine 185 is a substrate binding site.

Belongs to the Thz kinase family. Mg(2+) is required as a cofactor.

The enzyme catalyses 5-(2-hydroxyethyl)-4-methylthiazole + ATP = 4-methyl-5-(2-phosphooxyethyl)-thiazole + ADP + H(+). The protein operates within cofactor biosynthesis; thiamine diphosphate biosynthesis; 4-methyl-5-(2-phosphoethyl)-thiazole from 5-(2-hydroxyethyl)-4-methylthiazole: step 1/1. Catalyzes the phosphorylation of the hydroxyl group of 4-methyl-5-beta-hydroxyethylthiazole (THZ). This Rhizobium etli (strain ATCC 51251 / DSM 11541 / JCM 21823 / NBRC 15573 / CFN 42) protein is Hydroxyethylthiazole kinase.